A 673-amino-acid polypeptide reads, in one-letter code: Putative lipase atg15 (673 aa).

Topologically, residues 1-7 (MPRKRSR) are cytoplasmic. The helical; Signal-anchor for type II membrane protein transmembrane segment at 8–28 (FELSIHSLLLSVAVLSGAAYA) threads the bilayer. Topologically, residues 29-673 (SGYYPPSQQV…AVTSAPTPTS (645 aa)) are lumenal. Asparagine 156, asparagine 191, asparagine 213, asparagine 271, and asparagine 295 each carry an N-linked (GlcNAc...) asparagine glycan. Serine 311 functions as the Charge relay system in the catalytic mechanism. Asparagine 457 carries N-linked (GlcNAc...) asparagine glycosylation.

The protein belongs to the AB hydrolase superfamily. Lipase family. As to quaternary structure, binds to both phosphatidylinositol (PI) and phosphatidylinositol 3,5-bisphosphate (PIP2).

Its subcellular location is the endosome. It localises to the multivesicular body membrane. The protein localises to the prevacuolar compartment membrane. The enzyme catalyses a triacylglycerol + H2O = a diacylglycerol + a fatty acid + H(+). Functionally, lipase which is essential for lysis of subvacuolar cytoplasm to vacuole targeted bodies and intravacuolar autophagic bodies. Involved in the lysis of intravacuolar multivesicular body (MVB) vesicles. The intravacuolar membrane disintegration by atg15 is critical to life span extension. This is Putative lipase atg15 (atg15) from Penicillium rubens (strain ATCC 28089 / DSM 1075 / NRRL 1951 / Wisconsin 54-1255) (Penicillium chrysogenum).